An 829-amino-acid polypeptide reads, in one-letter code: Colorectal mutant cancer protein (829 aa).

Disordered stretches follow at residues 114–139 (RSEL…TSVS), 282–320 (TRLQ…SSND), and 672–700 (EEQK…CADA). Basic and acidic residues predominate over residues 123–132 (EVNEDSRSMD). A compositionally biased stretch (polar residues) spans 285–312 (QSVQATGPSSPGRLTSTNRPINPSTGEL). The span at 689-698 (SKDKPGKECA) shows a compositional bias: basic and acidic residues. The Nuclear localization signal signature appears at 766-782 (KRANSNLVAAYEKAKKK). The PDZ-binding motif lies at 826-829 (ETSL). The residue at position 828 (Ser-828) is a Phosphoserine.

This sequence belongs to the MCC family. In terms of assembly, interacts with SCRIB (via phosphorylated PDZ-binding motif), EZR, SNX27, NHERF1 and NHERF2. Interacts with CTNNB1; the interaction is enhanced upon Wnt stimulation. Interacts with MYH10. Interacts with CCAR2. As to expression, expressed in a variety of tissues.

It is found in the cell membrane. It localises to the cell projection. The protein localises to the lamellipodium. The protein resides in the nucleus. Its subcellular location is the cytoplasm. Candidate for the putative colorectal tumor suppressor gene located at 5q21. Suppresses cell proliferation and the Wnt/b-catenin pathway in colorectal cancer cells. Inhibits DNA binding of b-catenin/TCF/LEF transcription factors. Involved in cell migration independently of RAC1, CDC42 and p21-activated kinase (PAK) activation. Represses the beta-catenin pathway (canonical Wnt signaling pathway) in a CCAR2-dependent manner by sequestering CCAR2 to the cytoplasm, thereby impairing its ability to inhibit SIRT1 which is involved in the deacetylation and negative regulation of beta-catenin (CTNB1) transcriptional activity. In Homo sapiens (Human), this protein is Colorectal mutant cancer protein (MCC).